The following is a 135-amino-acid chain: Class I hydrophobin dewB (135 aa).

Positions 1–17 (MKFIGLATLSLFALASA) are cleaved as a signal peptide. Intrachain disulfides connect cysteine 35-cysteine 109, cysteine 43-cysteine 103, cysteine 44-cysteine 84, and cysteine 110-cysteine 128.

The protein belongs to the fungal hydrophobin family. Self-assembles to form functional amyloid fibrils called rodlets. Self-assembly into fibrillar rodlets occurs spontaneously at hydrophobic:hydrophilic interfaces and the rodlets further associate laterally to form amphipathic monolayers.

Its subcellular location is the secreted. The protein resides in the spore wall. Its function is as follows. Aerial growth, conidiation, and dispersal of filamentous fungi in the environment rely upon a capability of their secreting small amphipathic proteins called hydrophobins (HPBs) with low sequence identity. Class I can self-assemble into an outermost layer of rodlet bundles on aerial cell surfaces, conferring cellular hydrophobicity that supports fungal growth, development and dispersal; whereas Class II form highly ordered films at water-air interfaces through intermolecular interactions but contribute nothing to the rodlet structure. DewB is a class I hydrophobin that contributes to the hydrophobicity of the spore surface. This Emericella nidulans (strain FGSC A4 / ATCC 38163 / CBS 112.46 / NRRL 194 / M139) (Aspergillus nidulans) protein is Class I hydrophobin dewB.